The primary structure comprises 460 residues: Diguanylate cyclase DosC (460 aa).

Residue histidine 98 participates in heme binding. A GGDEF domain is found at threonine 325 to alanine 458. Aspartate 333 lines the Mg(2+) pocket. Substrate-binding residues include asparagine 341 and aspartate 350. Mg(2+) is bound at residue aspartate 376. Aspartate 376 serves as the catalytic Proton acceptor.

Heme is required as a cofactor. Requires Mg(2+) as cofactor.

The enzyme catalyses 2 GTP = 3',3'-c-di-GMP + 2 diphosphate. It functions in the pathway purine metabolism; 3',5'-cyclic di-GMP biosynthesis. Globin-coupled heme-based oxygen sensor protein displaying diguanylate cyclase (DGC) activity in response to oxygen availability. Thus, catalyzes the synthesis of cyclic diguanylate (c-di-GMP) via the condensation of 2 GTP molecules. Cyclic-di-GMP is a second messenger which controls cell surface-associated traits in bacteria. In Escherichia coli O157:H7, this protein is Diguanylate cyclase DosC (dosC).